The following is a 276-amino-acid chain: Mitochondrial outer membrane protein porin of 34 kDa (276 aa).

This sequence belongs to the eukaryotic mitochondrial porin (TC 1.B.8.1) family.

The protein localises to the mitochondrion outer membrane. Functionally, forms a channel through the cell membrane that allows diffusion of small hydrophilic molecules. The channel adopts an open conformation at low or zero membrane potential and a closed conformation at potentials above 30-40 mV. The open state has a weak anion selectivity whereas the closed state is cation-selective. In Solanum tuberosum (Potato), this protein is Mitochondrial outer membrane protein porin of 34 kDa.